A 120-amino-acid chain; its full sequence is Small ribosomal subunit protein bS16 (120 aa).

Residues 81 to 120 (GLAKRPARNNPQKAEPGEKAKERAAKRAEKAAAPAEDAAA) form a disordered region. The segment covering 95–110 (EPGEKAKERAAKRAEK) has biased composition (basic and acidic residues). A compositionally biased stretch (low complexity) spans 111-120 (AAAPAEDAAA).

Belongs to the bacterial ribosomal protein bS16 family.

The chain is Small ribosomal subunit protein bS16 from Methylobacterium radiotolerans (strain ATCC 27329 / DSM 1819 / JCM 2831 / NBRC 15690 / NCIMB 10815 / 0-1).